The chain runs to 290 residues: GTPase Era (290 aa).

One can recognise an Era-type G domain in the interval 2–169; sequence KSGFVSIIGR…KDKIYENLNE (168 aa). The segment at 10–17 is G1; it reads GRPSTGKS. 10–17 is a binding site for GTP; sequence GRPSTGKS. The segment at 36-40 is G2; the sequence is QTTRN. The G3 stretch occupies residues 57 to 60; that stretch reads DTPG. GTP contacts are provided by residues 57–61 and 119–122; these read DTPGF and NKID. A G4 region spans residues 119–122; sequence NKID. The interval 148 to 150 is G5; the sequence is ISA. Positions 200–276 constitute a KH type-2 domain; the sequence is LKEELPYSIY…NLFLQVKLRK (77 aa).

This sequence belongs to the TRAFAC class TrmE-Era-EngA-EngB-Septin-like GTPase superfamily. Era GTPase family. As to quaternary structure, monomer.

Its subcellular location is the cytoplasm. It localises to the cell inner membrane. In terms of biological role, an essential GTPase that binds both GDP and GTP, with rapid nucleotide exchange. Plays a role in 16S rRNA processing and 30S ribosomal subunit biogenesis and possibly also in cell cycle regulation and energy metabolism. This is GTPase Era from Borrelia duttonii (strain Ly).